A 778-amino-acid polypeptide reads, in one-letter code: Endonuclease MutS2 (778 aa).

Residue 328-335 (GPNTGGKT) coordinates ATP. Residues 702–777 (LDLRGKRYEE…GSGATIVTFK (76 aa)) enclose the Smr domain.

It belongs to the DNA mismatch repair MutS family. MutS2 subfamily. Homodimer. Binds to stalled ribosomes, contacting rRNA.

Functionally, endonuclease that is involved in the suppression of homologous recombination and thus may have a key role in the control of bacterial genetic diversity. Acts as a ribosome collision sensor, splitting the ribosome into its 2 subunits. Detects stalled/collided 70S ribosomes which it binds and splits by an ATP-hydrolysis driven conformational change. Acts upstream of the ribosome quality control system (RQC), a ribosome-associated complex that mediates the extraction of incompletely synthesized nascent chains from stalled ribosomes and their subsequent degradation. Probably generates substrates for RQC. The polypeptide is Endonuclease MutS2 (Streptococcus pneumoniae (strain CGSP14)).